The primary structure comprises 202 residues: Holliday junction branch migration complex subunit RuvA (202 aa).

Residues 1 to 65 (MIGYLEGRVV…EDALELFGFA (65 aa)) are domain I. A domain II region spans residues 66–144 (SLDDRETFRT…GRAPAAGLAP (79 aa)). Residues 145–155 (SVPIPGGVAGD) are flexible linker. The interval 155-202 (DVVAGLTNLGYPEPEARQVAAEVLEAEPDLDVAAALRQALKRLASAKK) is domain III.

Belongs to the RuvA family. In terms of assembly, homotetramer. Forms an RuvA(8)-RuvB(12)-Holliday junction (HJ) complex. HJ DNA is sandwiched between 2 RuvA tetramers; dsDNA enters through RuvA and exits via RuvB. An RuvB hexamer assembles on each DNA strand where it exits the tetramer. Each RuvB hexamer is contacted by two RuvA subunits (via domain III) on 2 adjacent RuvB subunits; this complex drives branch migration. In the full resolvosome a probable DNA-RuvA(4)-RuvB(12)-RuvC(2) complex forms which resolves the HJ.

Its subcellular location is the cytoplasm. Functionally, the RuvA-RuvB-RuvC complex processes Holliday junction (HJ) DNA during genetic recombination and DNA repair, while the RuvA-RuvB complex plays an important role in the rescue of blocked DNA replication forks via replication fork reversal (RFR). RuvA specifically binds to HJ cruciform DNA, conferring on it an open structure. The RuvB hexamer acts as an ATP-dependent pump, pulling dsDNA into and through the RuvAB complex. HJ branch migration allows RuvC to scan DNA until it finds its consensus sequence, where it cleaves and resolves the cruciform DNA. In Solidesulfovibrio magneticus (strain ATCC 700980 / DSM 13731 / RS-1) (Desulfovibrio magneticus), this protein is Holliday junction branch migration complex subunit RuvA.